We begin with the raw amino-acid sequence, 337 residues long: N-acetyl-gamma-glutamyl-phosphate reductase (337 aa).

C145 is an active-site residue.

Belongs to the NAGSA dehydrogenase family. Type 1 subfamily.

It localises to the cytoplasm. The catalysed reaction is N-acetyl-L-glutamate 5-semialdehyde + phosphate + NADP(+) = N-acetyl-L-glutamyl 5-phosphate + NADPH + H(+). It participates in amino-acid biosynthesis; L-arginine biosynthesis; N(2)-acetyl-L-ornithine from L-glutamate: step 3/4. Catalyzes the NADPH-dependent reduction of N-acetyl-5-glutamyl phosphate to yield N-acetyl-L-glutamate 5-semialdehyde. This is N-acetyl-gamma-glutamyl-phosphate reductase from Methanosarcina barkeri (strain Fusaro / DSM 804).